The chain runs to 396 residues: DNA polymerase processivity factor (396 aa).

Positions 306–396 (AEGGESSQKV…VPKTTFNPLI (91 aa)) are disordered. Residues 376 to 386 (SDSSQSRDRGK) are compositionally biased toward basic and acidic residues.

Belongs to the herpesviridae DNA polymerase accessory subunit family. Homooligomerizes and adopts an oligomeric ring-shaped structure composed of 6 subunits. Forms a complex with the DNA-binding protein, the DNA polymerase subunit, and the alkaline exonuclease.

It is found in the virion tegument. Its subcellular location is the host nucleus. Plays an essential role in the viral lytic DNA replication by acting as the polymerase accessory subunit. Stimulates the viral DNA polymerase activity and appears to function with it as a holoenzyme. Increases the processivity of the viral polymerase, probably by acting as a sliding clamp that prevents dissociation of the polymerase from the active template. This chain is DNA polymerase processivity factor (ORF59), found in Homo sapiens (Human).